Reading from the N-terminus, the 218-residue chain is Putative glutamine transport system permease protein GlnP (218 aa).

The 190-residue stretch at 19–208 folds into the ABC transmembrane type-1 domain; the sequence is TLITLKYSVI…ILVMLISFIA (190 aa). Helical transmembrane passes span 25–45, 57–79, 86–108, and 187–207; these read YSVI…LCKV, FYTS…FASP, FTVF…SEVI, and FFPM…ISFI.

Belongs to the binding-protein-dependent transport system permease family. HisMQ subfamily.

It is found in the cell inner membrane. Part of the binding-protein-dependent transport system for glutamine; probably responsible for the translocation of the substrate across the membrane. The polypeptide is Putative glutamine transport system permease protein GlnP (glnP) (Rickettsia bellii (strain RML369-C)).